Here is an 87-residue protein sequence, read N- to C-terminus: Large ribosomal subunit protein bL27 (87 aa).

It belongs to the bacterial ribosomal protein bL27 family.

This chain is Large ribosomal subunit protein bL27, found in Paenarthrobacter aurescens (strain TC1).